Reading from the N-terminus, the 221-residue chain is Urease accessory protein UreF (221 aa).

Belongs to the UreF family. In terms of assembly, ureD, UreF and UreG form a complex that acts as a GTP-hydrolysis-dependent molecular chaperone, activating the urease apoprotein by helping to assemble the nickel containing metallocenter of UreC. The UreE protein probably delivers the nickel.

The protein resides in the cytoplasm. In terms of biological role, required for maturation of urease via the functional incorporation of the urease nickel metallocenter. The chain is Urease accessory protein UreF from Vibrio parahaemolyticus.